The following is a 188-amino-acid chain: Small ribosomal subunit protein eS8 (188 aa).

The disordered stretch occupies residues 1 to 34 (MGISRDSRHKRRLTGGRYPVHKKKRKYELGRPSS). A compositionally biased stretch (basic residues) spans 7-26 (SRHKRRLTGGRYPVHKKKRK).

This sequence belongs to the eukaryotic ribosomal protein eS8 family.

The chain is Small ribosomal subunit protein eS8 (RPS8) from Theileria parva (East coast fever infection agent).